The following is a 188-amino-acid chain: NADH-quinone oxidoreductase subunit I 2 (188 aa).

4Fe-4S ferredoxin-type domains are found at residues 56–88 and 98–127; these read HFLK…VVPY and AKFE…LGQQ. [4Fe-4S] cluster contacts are provided by Cys-68, Cys-71, Cys-74, Cys-78, Cys-107, Cys-110, Cys-113, and Cys-117.

It belongs to the complex I 23 kDa subunit family. As to quaternary structure, NDH-1 is composed of 14 different subunits. Subunits NuoA, H, J, K, L, M, N constitute the membrane sector of the complex. It depends on [4Fe-4S] cluster as a cofactor.

It localises to the cell inner membrane. It carries out the reaction a quinone + NADH + 5 H(+)(in) = a quinol + NAD(+) + 4 H(+)(out). Its function is as follows. NDH-1 shuttles electrons from NADH, via FMN and iron-sulfur (Fe-S) centers, to quinones in the respiratory chain. The immediate electron acceptor for the enzyme in this species is believed to be ubiquinone. Couples the redox reaction to proton translocation (for every two electrons transferred, four hydrogen ions are translocated across the cytoplasmic membrane), and thus conserves the redox energy in a proton gradient. In Rhizobium etli (strain ATCC 51251 / DSM 11541 / JCM 21823 / NBRC 15573 / CFN 42), this protein is NADH-quinone oxidoreductase subunit I 2.